The primary structure comprises 26 residues: AMP deaminase 1 (26 aa).

It belongs to the metallo-dependent hydrolases superfamily. Adenosine and AMP deaminases family. In terms of assembly, homotetramer.

The catalysed reaction is AMP + H2O + H(+) = IMP + NH4(+). It functions in the pathway purine metabolism; IMP biosynthesis via salvage pathway; IMP from AMP: step 1/1. AMP deaminase plays a critical role in energy metabolism. The chain is AMP deaminase 1 (AMPD1) from Gallus gallus (Chicken).